Here is a 112-residue protein sequence, read N- to C-terminus: Large ribosomal subunit protein uL24 (112 aa).

Residues 92–112 form a disordered region; it reads ERDGKQKTVRVRVSKSTGKDL.

The protein belongs to the universal ribosomal protein uL24 family. As to quaternary structure, part of the 50S ribosomal subunit.

Functionally, one of two assembly initiator proteins, it binds directly to the 5'-end of the 23S rRNA, where it nucleates assembly of the 50S subunit. In terms of biological role, one of the proteins that surrounds the polypeptide exit tunnel on the outside of the subunit. This chain is Large ribosomal subunit protein uL24, found in Kocuria rhizophila (strain ATCC 9341 / DSM 348 / NBRC 103217 / DC2201).